We begin with the raw amino-acid sequence, 348 residues long: Ion-translocating oxidoreductase complex subunit D (348 aa).

5 consecutive transmembrane segments (helical) span residues 15–35, 36–56, 67–87, 88–108, and 125–145; these read LTAK…GMQA, YFFG…AVAI, PTAF…LAIS, IPPY…LLLA, and VAYA…LVPI. Threonine 186 carries the FMN phosphoryl threonine modification. The next 5 membrane-spanning stretches (helical) occupy residues 212–232, 241–261, 265–285, 298–318, and 320–340; these read LFAN…LLLI, IPAA…LLLP, LNVV…FIAT, LIFG…GNYP, and AVAF…HYTQ.

Belongs to the NqrB/RnfD family. The complex is composed of six subunits: RnfA, RnfB, RnfC, RnfD, RnfE and RnfG. FMN is required as a cofactor.

It localises to the cell inner membrane. Its function is as follows. Part of a membrane-bound complex that couples electron transfer with translocation of ions across the membrane. The protein is Ion-translocating oxidoreductase complex subunit D of Actinobacillus pleuropneumoniae serotype 5b (strain L20).